The chain runs to 99 residues: Putative transmembrane protein ORF13 (99 aa).

The next 3 helical transmembrane spans lie at 8 to 28 (IATF…MAGI), 42 to 62 (LGLF…YIIV), and 73 to 93 (GPIT…AIIA).

The protein localises to the host membrane. The polypeptide is Putative transmembrane protein ORF13 (His1 virus (isolate Australia/Victoria) (His1V)).